The following is a 177-amino-acid chain: Cytoglobin-1 (177 aa).

The Globin domain maps to 16 to 165 (PLTDKERVMI…LCCSIKAVYE (150 aa)). Heme b-binding residues include histidine 79 and histidine 111.

Belongs to the globin family. In terms of assembly, monomeric.

The protein localises to the cytoplasm. Its subcellular location is the nucleus. The catalysed reaction is Fe(II)-heme b-[protein] + nitric oxide + O2 = Fe(III)-heme b-[protein] + nitrate. It catalyses the reaction Fe(III)-heme b-[protein] + nitric oxide + H2O = Fe(II)-heme b-[protein] + nitrite + 2 H(+). It carries out the reaction 2 superoxide + 2 H(+) = H2O2 + O2. The enzyme catalyses H2O2 + AH2 = A + 2 H2O. In terms of biological role, probable multifunctional globin with a hexacoordinated heme iron required for the catalysis of various reactions depending on redox condition of the cell as well as oxygen availability. Has a nitric oxide dioxygenase (NOD) activity and is most probably involved in cell-mediated and oxygen-dependent nitric oxide consumption. Under normoxic conditions functions as a nitric oxide dioxygenase (NOD) but under hypoxic conditions the globin may switch its function to that of a nitrite (NO2) reductase (NiR), generating nitric oxide. Could also have peroxidase and superoxide dismutase activities, detoxifying reactive oxygen species and protecting cells against oxidative stress. Also binds dioxygen with low affinity and could function as an oxygen sensor but has probably no function as a respiratory oxygen carrier. The polypeptide is Cytoglobin-1 (Oryzias latipes (Japanese rice fish)).